A 571-amino-acid chain; its full sequence is Potassium-transporting ATPase potassium-binding subunit (571 aa).

12 helical membrane passes run Gly5 to Gly25, Leu64 to Leu84, Gly136 to Ile156, Leu179 to Pro199, Val220 to Phe240, Leu254 to Phe274, Trp285 to Ala305, Phe330 to Val350, Ile375 to Phe395, Met421 to Val441, Leu488 to Gly508, and Gly527 to Phe547.

Belongs to the KdpA family. As to quaternary structure, the system is composed of three essential subunits: KdpA, KdpB and KdpC.

The protein localises to the cell inner membrane. Functionally, part of the high-affinity ATP-driven potassium transport (or Kdp) system, which catalyzes the hydrolysis of ATP coupled with the electrogenic transport of potassium into the cytoplasm. This subunit binds the periplasmic potassium ions and delivers the ions to the membrane domain of KdpB through an intramembrane tunnel. The polypeptide is Potassium-transporting ATPase potassium-binding subunit (Methylorubrum extorquens (strain PA1) (Methylobacterium extorquens)).